A 412-amino-acid chain; its full sequence is Proteasome-activating nucleotidase (412 aa).

Residues 15-73 (EDIYQYLLERITNLENRNLELREQFRQMESEKRYVETQKIRYERELRKLKSEIEQLRSP) adopt a coiled-coil conformation. ATP-binding positions include 197–202 (GTGKTL) and His-336. The segment at 410–412 (MFA) is docks into pockets in the proteasome alpha-ring to cause gate opening.

The protein belongs to the AAA ATPase family. Homohexamer. The hexameric complex has a two-ring architecture resembling a top hat that caps the 20S proteasome core at one or both ends. Upon ATP-binding, the C-terminus of PAN interacts with the alpha-rings of the proteasome core by binding to the intersubunit pockets.

The protein localises to the cytoplasm. Functionally, ATPase which is responsible for recognizing, binding, unfolding and translocation of substrate proteins into the archaeal 20S proteasome core particle. Is essential for opening the gate of the 20S proteasome via an interaction with its C-terminus, thereby allowing substrate entry and access to the site of proteolysis. Thus, the C-termini of the proteasomal ATPase function like a 'key in a lock' to induce gate opening and therefore regulate proteolysis. Unfolding activity requires energy from ATP hydrolysis, whereas ATP binding alone promotes ATPase-20S proteasome association which triggers gate opening, and supports translocation of unfolded substrates. The protein is Proteasome-activating nucleotidase of Methanoculleus marisnigri (strain ATCC 35101 / DSM 1498 / JR1).